The sequence spans 250 residues: Ubiquinone/menaquinone biosynthesis C-methyltransferase UbiE (250 aa).

S-adenosyl-L-methionine contacts are provided by residues threonine 74, aspartate 94, 122 to 123 (DA), and serine 139.

The protein belongs to the class I-like SAM-binding methyltransferase superfamily. MenG/UbiE family.

It carries out the reaction a 2-demethylmenaquinol + S-adenosyl-L-methionine = a menaquinol + S-adenosyl-L-homocysteine + H(+). The catalysed reaction is a 2-methoxy-6-(all-trans-polyprenyl)benzene-1,4-diol + S-adenosyl-L-methionine = a 5-methoxy-2-methyl-3-(all-trans-polyprenyl)benzene-1,4-diol + S-adenosyl-L-homocysteine + H(+). Its pathway is quinol/quinone metabolism; menaquinone biosynthesis; menaquinol from 1,4-dihydroxy-2-naphthoate: step 2/2. The protein operates within cofactor biosynthesis; ubiquinone biosynthesis. Its function is as follows. Methyltransferase required for the conversion of demethylmenaquinol (DMKH2) to menaquinol (MKH2) and the conversion of 2-polyprenyl-6-methoxy-1,4-benzoquinol (DDMQH2) to 2-polyprenyl-3-methyl-6-methoxy-1,4-benzoquinol (DMQH2). This Ruegeria sp. (strain TM1040) (Silicibacter sp.) protein is Ubiquinone/menaquinone biosynthesis C-methyltransferase UbiE.